Reading from the N-terminus, the 492-residue chain is Tumor necrosis factor receptor superfamily member 8 (492 aa).

A signal peptide spans 1-18 (MSILLKAAGLLFLGMLQA). The Extracellular segment spans residues 19 to 282 (FPKDRPLDTT…STGTPFLDPG (264 aa)). TNFR-Cys repeat units follow at residues 57-104 (PCPQ…PRIC) and 105-141 (ECQP…NTIC). 4 cysteine pairs are disulfide-bonded: Cys-58–Cys-80, Cys-83–Cys-96, Cys-86–Cys-104, and Cys-123–Cys-141. Residues 141–178 (CDLPSPGSGPNGSNPDDCKTLTSHTTPQAIPTLESPAN) form a disordered region. Low complexity predominate over residues 144-155 (PSPGSGPNGSNP). Residues Asn-151, Asn-178, and Asn-224 are each glycosylated (N-linked (GlcNAc...) asparagine). Over residues 160–178 (TLTSHTTPQAIPTLESPAN) the composition is skewed to polar residues. A helical membrane pass occupies residues 283–303 (SMLFWVAMVVLLVGSASFLLC). Residues 304 to 492 (YWKACRRRFQ…DHEPTTVSEK (189 aa)) lie on the Cytoplasmic side of the membrane. Residues Ser-334 and Ser-348 each carry the phosphoserine modification. 2 disordered regions span residues 336–366 (PTEK…PPAV) and 432–492 (PEGR…VSEK). A compositionally biased stretch (polar residues) spans 339–360 (KLTQLQRSGSVTDSSAGHTLSP). Composition is skewed to basic and acidic residues over residues 450–459 (EVDHTPHYPE) and 478–492 (EGGK…VSEK).

It belongs to the TNFR8 family. As to quaternary structure, interacts with TRAF1, TRAF2, TRAF3 and TRAF5. Very low level of expression. Detected in spleen, thymus and lung. Highly expressed in HTLV-1 infected T-cell lines.

The protein resides in the cell membrane. Functionally, receptor for TNFSF8/CD30L. May play a role in the regulation of cellular growth and transformation of activated lymphoblasts. Regulates gene expression through activation of NF-kappa-B. In Rattus norvegicus (Rat), this protein is Tumor necrosis factor receptor superfamily member 8.